We begin with the raw amino-acid sequence, 327 residues long: DNA-directed RNA polymerase subunit alpha (327 aa).

Positions 1–233 (MQNVLKSFLT…HQLAAFVDLK (233 aa)) are alpha N-terminal domain (alpha-NTD). The tract at residues 247-327 (VNPLLLRPVE…GWPPADLTDQ (81 aa)) is alpha C-terminal domain (alpha-CTD).

The protein belongs to the RNA polymerase alpha chain family. As to quaternary structure, homodimer. The RNAP catalytic core consists of 2 alpha, 1 beta, 1 beta' and 1 omega subunit. When a sigma factor is associated with the core the holoenzyme is formed, which can initiate transcription.

It carries out the reaction RNA(n) + a ribonucleoside 5'-triphosphate = RNA(n+1) + diphosphate. DNA-dependent RNA polymerase catalyzes the transcription of DNA into RNA using the four ribonucleoside triphosphates as substrates. The protein is DNA-directed RNA polymerase subunit alpha of Coxiella burnetii (strain CbuK_Q154) (Coxiella burnetii (strain Q154)).